Here is a 303-residue protein sequence, read N- to C-terminus: Bidirectional sugar transporter SWEET14 (303 aa).

Residues 1 to 9 are Extracellular-facing; sequence MAGMSLQHP. Residues 10–30 form a helical membrane-spanning segment; it reads WAFAFGLLGNIISFMTYLAPL. A MtN3/slv 1 domain is found at 13-98; it reads AFGLLGNIIS…AVYLVYAPKK (86 aa). Residues 31–44 lie on the Cytoplasmic side of the membrane; that stretch reads PTFYRIYKSKSTQG. A helical membrane pass occupies residues 45 to 65; the sequence is FQSVPYVVALFSAMLWIYYAL. At 66-72 the chain is on the extracellular side; sequence LKSDECL. The chain crosses the membrane as a helical span at residues 73 to 93; that stretch reads LITINSAGCVIETIYIAVYLV. Residues 94-105 lie on the Cytoplasmic side of the membrane; the sequence is YAPKKAKMFTAK. The chain crosses the membrane as a helical span at residues 106–126; that stretch reads LLLLVNVGVFGLILLLTLLLS. The Extracellular segment spans residues 127-133; it reads AGDRRIV. A helical membrane pass occupies residues 134–154; sequence VLGWVCVGFSVSVFVAPLSII. Residues 134–217 form the MtN3/slv 2 domain; sequence VLGWVCVGFS…MGLYAMYRNS (84 aa). Residues 155–167 lie on the Cytoplasmic side of the membrane; the sequence is RLVVRTKSVEFMP. A helical transmembrane segment spans residues 168–188; it reads FSLSFSLTISAVVWFLYGLLI. Over 189-192 the chain is Extracellular; sequence KDKY. The helical transmembrane segment at 193-213 threads the bilayer; sequence VALPNVLGFSFGVIQMGLYAM. The Cytoplasmic segment spans residues 214 to 303; that stretch reads YRNSTPKAVL…AGAGEKKVAA (90 aa). Residues 266 to 290 form a disordered region; the sequence is HPVDVESPPAEAPPQEDDKAAAATA.

Belongs to the SWEET sugar transporter family. As to quaternary structure, forms homooligomers and/or heterooligomers.

The protein localises to the cell membrane. Functionally, mediates both low-affinity uptake and efflux of sugar across the plasma membrane. The polypeptide is Bidirectional sugar transporter SWEET14 (SWEET14) (Oryza sativa subsp. indica (Rice)).